Consider the following 123-residue polypeptide: Ribonuclease P protein component (123 aa).

Belongs to the RnpA family. In terms of assembly, consists of a catalytic RNA component (M1 or rnpB) and a protein subunit.

It catalyses the reaction Endonucleolytic cleavage of RNA, removing 5'-extranucleotides from tRNA precursor.. In terms of biological role, RNaseP catalyzes the removal of the 5'-leader sequence from pre-tRNA to produce the mature 5'-terminus. It can also cleave other RNA substrates such as 4.5S RNA. The protein component plays an auxiliary but essential role in vivo by binding to the 5'-leader sequence and broadening the substrate specificity of the ribozyme. This is Ribonuclease P protein component from Streptococcus pneumoniae serotype 4 (strain ATCC BAA-334 / TIGR4).